We begin with the raw amino-acid sequence, 298 residues long: DNA-3-methyladenine glycosylase (298 aa).

Residues 1-17 constitute a mitochondrion transit peptide; it reads MVTPALQMKKPKQFCRR. Positions 1 to 65 are disordered; that stretch reads MVTPALQMKK…CPRERCLGPP (65 aa). A compositionally biased stretch (basic residues) spans 9 to 25; sequence KKPKQFCRRMGQKKQRP. Phosphoserine occurs at positions 78 and 252.

This sequence belongs to the DNA glycosylase MPG family. In terms of assembly, binds MBD1. Binds SSBP1.

Its subcellular location is the cytoplasm. The protein localises to the mitochondrion matrix. The protein resides in the mitochondrion nucleoid. It localises to the nucleus. The catalysed reaction is Hydrolysis of alkylated DNA, releasing 3-methyladenine, 3-methylguanine, 7-methylguanine and 7-methyladenine.. Binding to SSBP1 in mitochondria inhibits glycosylase activity in the context of a single-stranded DNA (ssDNA), but not a double-stranded DNA (dsDNA) substrates. Functionally, hydrolysis of the deoxyribose N-glycosidic bond to excise 3-methyladenine, and 7-methylguanine from the damaged DNA polymer formed by alkylation lesions. This chain is DNA-3-methyladenine glycosylase (MPG), found in Homo sapiens (Human).